A 191-amino-acid chain; its full sequence is Fe/S biogenesis protein NfuA (191 aa).

[4Fe-4S] cluster contacts are provided by cysteine 149 and cysteine 152.

Belongs to the NfuA family. Homodimer. [4Fe-4S] cluster serves as cofactor.

Involved in iron-sulfur cluster biogenesis. Binds a 4Fe-4S cluster, can transfer this cluster to apoproteins, and thereby intervenes in the maturation of Fe/S proteins. Could also act as a scaffold/chaperone for damaged Fe/S proteins. This chain is Fe/S biogenesis protein NfuA, found in Cronobacter sakazakii (strain ATCC BAA-894) (Enterobacter sakazakii).